A 2263-amino-acid polypeptide reads, in one-letter code: Collagen alpha-6(VI) chain (2263 aa).

The N-terminal stretch at 1–19 (MMLLILFLVIICSHISVNQ) is a signal peptide. The nonhelical region stretch occupies residues 20 to 1391 (DSGPEYADVV…TCCCLFCKCI (1372 aa)). VWFA domains follow at residues 27–206 (DVVF…IKDV), 229–411 (DVVF…RNQI), 436–606 (DIYL…RNQV), 622–791 (DIMF…EDDL), and 809–982 (DVVF…FSDV). N-linked (GlcNAc...) asparagine glycans are attached at residues N198, N275, N288, N347, and N520. N930 and N988 each carry an N-linked (GlcNAc...) asparagine glycan. 2 VWFA domains span residues 1000 to 1171 (DLVF…NKRI) and 1187 to 1371 (DVVV…GSRL). Residue N1290 is glycosylated (N-linked (GlcNAc...) asparagine). The triple-helical region stretch occupies residues 1392–1725 (GGDGTMGDPG…GRKGVKGAKG (334 aa)). Residues 1397–1723 (MGDPGPPGKR…PPGRKGVKGA (327 aa)) form a disordered region. A compositionally biased stretch (basic and acidic residues) spans 1498–1508 (TPGDRGAKGLR). Residues 1508–1510 (RGD) carry the Cell attachment site motif. Basic residues predominate over residues 1547 to 1559 (SRRKTAAHGRRGH). Positions 1680–1689 (GDPGGPGETG) are enriched in gly residues. Positions 1726 to 2263 (LASFSTCELI…MIESAPKQHD (538 aa)) are nonhelical region. 2 VWFA domains span residues 1757–1937 (ELVF…ERLQ) and 1965–2166 (DAAF…INSI).

This sequence belongs to the type VI collagen family. In terms of assembly, trimers composed of three different chains: alpha-1(VI), alpha-2(VI), and alpha-3(VI) or alpha-5(VI) or alpha-6(VI). Post-translationally, prolines at the third position of the tripeptide repeating unit (G-X-Y) are hydroxylated in some or all of the chains.

It is found in the secreted. It localises to the extracellular space. Its subcellular location is the extracellular matrix. Collagen VI acts as a cell-binding protein. The sequence is that of Collagen alpha-6(VI) chain (COL6A6) from Homo sapiens (Human).